Here is a 92-residue protein sequence, read N- to C-terminus: DNA-directed RNA polymerase subunit omega (92 aa).

Belongs to the RNA polymerase subunit omega family. The RNAP catalytic core consists of 2 alpha, 1 beta, 1 beta' and 1 omega subunit. When a sigma factor is associated with the core the holoenzyme is formed, which can initiate transcription.

The enzyme catalyses RNA(n) + a ribonucleoside 5'-triphosphate = RNA(n+1) + diphosphate. Its function is as follows. Promotes RNA polymerase assembly. Latches the N- and C-terminal regions of the beta' subunit thereby facilitating its interaction with the beta and alpha subunits. The sequence is that of DNA-directed RNA polymerase subunit omega from Shewanella oneidensis (strain ATCC 700550 / JCM 31522 / CIP 106686 / LMG 19005 / NCIMB 14063 / MR-1).